Here is a 533-residue protein sequence, read N- to C-terminus: Glucose-6-phosphate isomerase (533 aa).

The Proton donor role is filled by Glu322. Active-site residues include His351 and Lys455.

This sequence belongs to the GPI family.

The protein localises to the cytoplasm. It catalyses the reaction alpha-D-glucose 6-phosphate = beta-D-fructose 6-phosphate. It functions in the pathway carbohydrate biosynthesis; gluconeogenesis. It participates in carbohydrate degradation; glycolysis; D-glyceraldehyde 3-phosphate and glycerone phosphate from D-glucose: step 2/4. Its function is as follows. Catalyzes the reversible isomerization of glucose-6-phosphate to fructose-6-phosphate. The chain is Glucose-6-phosphate isomerase from Desulfitobacterium hafniense (strain DSM 10664 / DCB-2).